A 219-amino-acid polypeptide reads, in one-letter code: MDQLSMKKMAAQAALQYVKPDSIIGVGSGSTVNCFIEVLGTIKETIKGAVAASKASEELLLRQGIEVFSANDVSGLDIYVDGADEINPQKMMIKGGGAALTREKIVAALAKKFICIVDSSKQVDVLGSTFALPIEVIPMARSQVARKLVALGGSPEYRENVVTDNGNVILDVYNFKIMNPIEMEKELNNVAGVVTNGIFALRSADIVIVGTPEGTKIIG.

Substrate is bound by residues 28-31, 81-84, and 94-97; these read SGST, DGAD, and KGGG. Catalysis depends on E103, which acts as the Proton acceptor. K121 lines the substrate pocket.

The protein belongs to the ribose 5-phosphate isomerase family. Homodimer.

It catalyses the reaction aldehydo-D-ribose 5-phosphate = D-ribulose 5-phosphate. Its pathway is carbohydrate degradation; pentose phosphate pathway; D-ribose 5-phosphate from D-ribulose 5-phosphate (non-oxidative stage): step 1/1. Its function is as follows. Catalyzes the reversible conversion of ribose-5-phosphate to ribulose 5-phosphate. The chain is Ribose-5-phosphate isomerase A from Histophilus somni (strain 2336) (Haemophilus somnus).